Consider the following 211-residue polypeptide: Transcriptional regulatory protein LiaR (211 aa).

The 117-residue stretch at 3-119 (RVLLIDDHEM…EIADAIRAAS (117 aa)) folds into the Response regulatory domain. D54 is modified (4-aspartylphosphate). The HTH luxR-type domain maps to 143-208 (NALPHESLTK…QAAVYAHRNH (66 aa)). A DNA-binding region (H-T-H motif) is located at residues 167–186 (NKEIGEELFITIKTVKTHIT).

In terms of processing, phosphorylated by LiaS.

The protein resides in the cytoplasm. Member of the two-component regulatory system LiaS/LiaR probably involved in response to a subset of cell wall-active antibiotics that interfere with the lipid II cycle in the cytoplasmic membrane (bacitracin, nisin, ramoplanin and vancomycin). Also seems to be involved in response to cationic antimicrobial peptides and secretion stress. LiaR regulates the transcription of the liaIHGFSR operon. The chain is Transcriptional regulatory protein LiaR (liaR) from Bacillus subtilis (strain 168).